The chain runs to 545 residues: Coiled-coil domain-containing protein 60 (545 aa).

A coiled-coil region spans residues 72–99 (NILREENAMKKKQQLLQKLKEEELNKFQ). The disordered stretch occupies residues 224 to 284 (PAIRTAMASR…DNESSSTKPE (61 aa)). Positions 238–259 (RGSTLSLTRTSGGSSPQSSMMS) are enriched in low complexity.

This is Coiled-coil domain-containing protein 60 (Ccdc60) from Mus musculus (Mouse).